The sequence spans 233 residues: Phosphoglycolate phosphatase (233 aa).

The Nucleophile role is filled by Asp-9. Mg(2+) is bound by residues Asp-9 and Asp-11. Lys-154 contacts substrate. Asp-177 and Asp-181 together coordinate Mg(2+).

Belongs to the archaeal SPP-like hydrolase family. Mg(2+) serves as cofactor.

The enzyme catalyses 2-phosphoglycolate + H2O = glycolate + phosphate. Catalyzes the dephosphorylation of 2-phosphoglycolate. The chain is Phosphoglycolate phosphatase from Pyrococcus abyssi (strain GE5 / Orsay).